A 207-amino-acid polypeptide reads, in one-letter code: Thiamine-phosphate synthase (207 aa).

4-amino-2-methyl-5-(diphosphooxymethyl)pyrimidine-binding positions include 38–42 (QYRNK) and N70. Residues D71 and D90 each coordinate Mg(2+). Residue S109 coordinates 4-amino-2-methyl-5-(diphosphooxymethyl)pyrimidine. 136 to 138 (TAT) contacts 2-[(2R,5Z)-2-carboxy-4-methylthiazol-5(2H)-ylidene]ethyl phosphate. K139 is a 4-amino-2-methyl-5-(diphosphooxymethyl)pyrimidine binding site. Residues G165 and 185–186 (VS) each bind 2-[(2R,5Z)-2-carboxy-4-methylthiazol-5(2H)-ylidene]ethyl phosphate.

It belongs to the thiamine-phosphate synthase family. Requires Mg(2+) as cofactor.

The enzyme catalyses 2-[(2R,5Z)-2-carboxy-4-methylthiazol-5(2H)-ylidene]ethyl phosphate + 4-amino-2-methyl-5-(diphosphooxymethyl)pyrimidine + 2 H(+) = thiamine phosphate + CO2 + diphosphate. It carries out the reaction 2-(2-carboxy-4-methylthiazol-5-yl)ethyl phosphate + 4-amino-2-methyl-5-(diphosphooxymethyl)pyrimidine + 2 H(+) = thiamine phosphate + CO2 + diphosphate. It catalyses the reaction 4-methyl-5-(2-phosphooxyethyl)-thiazole + 4-amino-2-methyl-5-(diphosphooxymethyl)pyrimidine + H(+) = thiamine phosphate + diphosphate. It participates in cofactor biosynthesis; thiamine diphosphate biosynthesis; thiamine phosphate from 4-amino-2-methyl-5-diphosphomethylpyrimidine and 4-methyl-5-(2-phosphoethyl)-thiazole: step 1/1. In terms of biological role, condenses 4-methyl-5-(beta-hydroxyethyl)thiazole monophosphate (THZ-P) and 2-methyl-4-amino-5-hydroxymethyl pyrimidine pyrophosphate (HMP-PP) to form thiamine monophosphate (TMP). The protein is Thiamine-phosphate synthase of Xanthomonas campestris pv. campestris (strain 8004).